Consider the following 421-residue polypeptide: MMEVLVLGSGVVGLTSAWYLAQAGHDVTVVDRQPRGAEETSFANAGQISYGYSSPWAAPGIPQKALKWMLEKHAPLKIQPSLDPALLSWMGKMLLNCQLSRYQVNKSRMLAIANYSRECLKALNQTYSLDYQGRQRGTLQVFRDEKQLTAIEKDMQLLAQSGVRFELLNVAQCLTHEPGLAPVQEKLVGGLWLPDDETGDYYLFCQQLTELAKQQGVRFHFDCHIQQLVCEGKKIIGVQTDLGLLKADAYVVALGSYSTSLLKPLGIEIPVYPVKGYSLTLPIIDEKFAPQSTVMDETYKVALTRFSDRIRVAGTAELAGFDPAIPEARKATIEMVARDLFPHGGDFAKGQFWTGFRPMTPDGTPIIGATPYTNLYTNTGHGTLGWTMACGSASILADVLTHGESPLSRLGLDLFRYPKAS.

An FAD-binding site is contributed by 4–18 (VLVLGSGVVGLTSAW).

The protein belongs to the DadA oxidoreductase family. FAD is required as a cofactor.

The catalysed reaction is a D-alpha-amino acid + A + H2O = a 2-oxocarboxylate + AH2 + NH4(+). It functions in the pathway amino-acid degradation; D-alanine degradation; NH(3) and pyruvate from D-alanine: step 1/1. In terms of biological role, oxidative deamination of D-amino acids. In Vibrio cholerae serotype O1 (strain ATCC 39541 / Classical Ogawa 395 / O395), this protein is D-amino acid dehydrogenase.